We begin with the raw amino-acid sequence, 252 residues long: Adenosylcobinamide-GDP ribazoletransferase (252 aa).

Helical transmembrane passes span 4–24, 38–58, 60–80, 113–133, 141–161, 190–210, and 232–252; these read LFKG…PYVE, PIIG…INYL, ISIV…TGML, FSVI…HSFL, ILMF…ITII, LVCI…LLIV, and VAGF…CLFT.

Belongs to the CobS family. It depends on Mg(2+) as a cofactor.

It is found in the cell membrane. It catalyses the reaction alpha-ribazole + adenosylcob(III)inamide-GDP = adenosylcob(III)alamin + GMP + H(+). The enzyme catalyses alpha-ribazole 5'-phosphate + adenosylcob(III)inamide-GDP = adenosylcob(III)alamin 5'-phosphate + GMP + H(+). It functions in the pathway cofactor biosynthesis; adenosylcobalamin biosynthesis; adenosylcobalamin from cob(II)yrinate a,c-diamide: step 7/7. Its function is as follows. Joins adenosylcobinamide-GDP and alpha-ribazole to generate adenosylcobalamin (Ado-cobalamin). Also synthesizes adenosylcobalamin 5'-phosphate from adenosylcobinamide-GDP and alpha-ribazole 5'-phosphate. In Clostridium botulinum (strain Eklund 17B / Type B), this protein is Adenosylcobinamide-GDP ribazoletransferase.